We begin with the raw amino-acid sequence, 5911 residues long: Nonribosomal peptide synthetase 30 (5911 aa).

Residues 1–22 (MVPEKPTAQSKSGIGEPFRAGD) are disordered. The segment at 352 to 754 (ALIQPSSTAV…GRKDAQVKIR (403 aa)) is adenylation 1. Residues 891–968 (PRPFSVEYSL…EAAAIVARGT (78 aa)) enclose the Carrier 1 domain. Ser928 carries the post-translational modification O-(pantetheine 4'-phosphoryl)serine. Positions 1007 to 1422 (EDAFPCTPLQ…ERLIFVIDQL (416 aa)) are condensation 1. The tract at residues 1467 to 1865 (ERALSQPDRP…SLMFVGRKAD (399 aa)) is adenylation 2. In terms of domain architecture, Carrier 2 spans 2001–2077 (QPTSELEAEM…NICSHSYYCS (77 aa)). The residue at position 2038 (Ser2038) is an O-(pantetheine 4'-phosphoryl)serine. Residues 2121–2538 (QDAYPCTPLQ…GPDINMSDIG (418 aa)) are condensation 2. The adenylation 3 stretch occupies residues 2568 to 2977 (EEQARLRPEA…GRKDSQVKIR (410 aa)). The Carrier 3 domain maps to 3110–3186 (QPSTNAQREL…LIADNSKSIK (77 aa)). O-(pantetheine 4'-phosphoryl)serine is present on Ser3147. Positions 3227–3652 (VQDAYPCTPL…LELVIQAFMA (426 aa)) are condensation 3. Residues 3701-4108 (EERVREQPNA…GRKDSQVKIR (408 aa)) form an adenylation 4 region. One can recognise a Carrier 4 domain in the interval 4248–4325 (PPTTPLECQM…DIIATMTKNK (78 aa)). O-(pantetheine 4'-phosphoryl)serine is present on Ser4285. Positions 4326 to 4347 (ATGASRRLPRDDDEPIPHTKYA) are disordered. The tract at residues 4353-4793 (SYAQGRLWFL…SLPLLTEDGR (441 aa)) is condensation 4. The interval 4819–5231 (FKEQVSRHPN…GRMDVQVKIR (413 aa)) is adenylation 5. The region spanning 5360-5436 (KPTTDMEVAL…ALARRQEEIV (77 aa)) is the Carrier 5 domain. The residue at position 5397 (Ser5397) is an O-(pantetheine 4'-phosphoryl)serine. Residues 5474–5828 (VEDMLPLTSM…GIKMKLHFFT (355 aa)) are condensation 5.

Belongs to the NRP synthetase family.

It functions in the pathway secondary metabolite biosynthesis. Its function is as follows. Nonribosomal peptide synthetase; part of the gene cluster that mediates the biosynthesis of sansalvamide, a cyclic pentadepsipeptide that shows promising results as potential anti-cancer drug. The nonribosmal peptide synthetase NRPS30 produces sansalvamide by incorporating successively one phenylalanine, one leucine, one alpha-hydroxyisocaproic acid (HICA), one valine and one leucine before sansalvamide is released from by cyclization by the terminal C domain of NRPS30. The HICA residue is probably provided by reduction of alpha-ketoisocaproate by the cluster-specific aldo-keto reductase (NECHADRAFT_45914). In Fusarium vanettenii (strain ATCC MYA-4622 / CBS 123669 / FGSC 9596 / NRRL 45880 / 77-13-4) (Fusarium solani subsp. pisi), this protein is Nonribosomal peptide synthetase 30.